The chain runs to 2645 residues: MPHRLPSHGASLGLIFGPQAMNFDSNTFTTLRAKLVKDRHSQWAIDAIAALPAEWSAVSGNVAIFKQYDAGKALQNLNEWLKTGHVPPADIPFCNVLLAPMVVIDHVISYLEFLQSAFPDLDDDEELPASAKESLETLGLSLGTLSAFAVSSSSTLSEVKKHGATAIRLAMLVGAVGDAEDLAREPEEGALSFSAFWKSTELHDLLHTSLDAIPEAYISVAVDEKRSTITTSRSKASSHMQDLRSSGLYIAEVSIRGRFHWDGHESTLQELIQYCDRNLQFQFPDTSRIVLPSHSVTGGEYITQEDGSLHAIALRAILVDLSQWLETITGAYGSESSKGIKSVVCFGPERCVPSALVRRLGSKLTHVLDVDLPTSALPKQLLQSADVSSTNGVKIPASIKGQSPARQHPIDIDANDDKIAVIGMACNVPGGEDMDEFWKILVAGKSQHEELPRGTGRFEFETPWREPYTKTKWYGNFIKDYDVFDHKFFKKGPREMLNTEPQHRLLLHAAYQTLEQSGYFSKPDYDKHIACFLGPGHVDYASSVNCYAPNAYTATGNLKSMCAGKISHHFGWTGPILTLDTACSSSCVAIHYACRSILSGEVSAALAGGSNVLSSVEWYENLSGAQFLSPTGQCKPFDAKADGYCRGDGIGLVFLKKLSTALADGDQVYGVIAGSKVYQNVGSTTITVPNADSLATLFKDITKQARIDPAKVSVVEAHGTGTPVGDPAEYEAICRIFGGSQRTDVLSLSSVKGLFGHTEGASGVCSLLKVLLMMHENAIPPQASFGSMNPGLKATTQDNIEVPTRLTPWKPNTQIALINNYGASGSNSSLVVTEPPAFETFDHEALQYRAFPFWIPGLDDKSIQRYATRLRAWFQRHHSSSKDLSMRNMSFQLAFQSNRTLPQALVFKAASVSDLESKLKAFENGTLNSISSAATSQRPVILCFGGQISTYIGLDREVYENVAVLRQFLDQCDETSVSLGFPSVFPHIFQKEPIYDLIKLQLALFAMQYSCAQAWIACGVEVAAVVGHSFGELTASCVSGTVSLQDAITMIAGRARLIQKKWGTDSGAMIAVDTELSGVNDLLAKTREGSGADDNPSIACYNGHRSFTLAGTTKSIEQAESILKQDATFSSTRWKRLNVTNAFHSVLVDSLHHDLQSLGKRIVFNEPKLHFERSTKERMSGKPNSDYIAHHMRNPVYFDHAVQRLAKDFPAAIWLEAGSNSTITSMANRALSSSAASSTSSFHAVSITTDKSFDLLVDSTLKLWKEQLNVSFWAHHRSQTHQYTPMILPPYQFEKSRHWLETKPPPKPEPIPVEKSTTQAVETSKGFTSFAGYIDGNQRSLRYRINSNHETFQRHVNGHICAKLAAVWPSSIQIDMVLDALMNLRAEFKDLSYQPQISNIVHHRPLLLDNSKDYWLELVAKDDKGLTWDWNFSSSSGLGSKSTICTSGVCSFCSATDPNRLAEFQTLERLSSRRRCVELLEARDVENIMQGTANIYRAFSEVIEYTDDYRYVKKLVGHNNESAARVVKKHYGKTWLDYLLFDGLGQTAGMYVNLMADKANVSEKGIFMCETINRWLRSPTIRSHESLPTDWEVYAVHHPISDKKYVSDIFSFDARDGSLVEVVLGASYNKVPLPVMRGILGSQSSTTRLDAITANAEIPSQAGIGSQQPHLNFKPLSALPALSNGTTGTENPQIKSKTNKVKKVPTRKSGGSDLETPAKTRNILENLTGVEASSINDDSNLIDLGLDSLLSMELIRDVEDIFKVDLDAEQMLDLTDFASLVKYIREIRGVLEEQNVDDSESESEELQQQATPIDSATRQNHEKLTMNGTGLLTNGESVPEVPLDSTLVLDAFRYIKEASDDFIVKNKFETYCAEFMPRSEEVSIAIFCNAFEELGCPIRTATAGTRLERVQHLPKHKKVVDYIYKALEKNAGLIEISGEEIIRTSVPCPSEQTEAMLESLLHDRPAQDAEIQLMRITGAAFGKCLAGKADVLPLLFGSIEGRALLTKLYATSTLSNTILQQLEVFVEKIGSSWPKDGGPLRILEVGAGTGGTTTKIVPVLARLGIPVEYTMTDVSSFFTATGRTKFKEYPFMKFKTVDIEKEPDAKLLKTQHIVLGSNVIHATRVLSVSLSNIHKMLRPDGLIIYHELTSQLLWADIIFGLVEGWWLFEDGRDHALQSPQHWEKILRSVGYGHVDWTDGTRPEAKIQNLIFAMASDPTYDREPLPTASIMTDVADQVATVNAYVCQYSSNFQFRRNSASRATGLSSGRCVLITGATGSLGAHLVAYCAERLDVSKVICFNRTSQTAGVARQAKAFKSKGISLEVNTNPKLEVIETDASKDQLGLSPSEYAALVDSVTDIVHNAWPMSINRGVRSYEGQFRVMRNLVDLARDATMQRPEPFKFGFQFISSIGVVGMYPLLTNNFLVPEHRMPVESVVPSGYGYAKLVCERMLDETLHLYPQAFHPSAVRINQIAGSTRSGYWNRNEHLVFLIKSSQTLNALPDLQGHLTWCPVDTVAATLGELLLDNANSVASAHPIYHIENPSRQSYSEMIRVLADSLFIDHANIIPFYDWVQRVRDFEGPVTENPAKQVVDFFDEHFLRMSCGDLVLDTVKSREISATLRARGVITSDLVNKYVEAWRRAGVLR.

The tract at residues 73 to 2366 is N-terminal acylcarrier protein transacylase domain (SAT); the sequence is ALQNLNEWLK…TDIVHNAWPM (2294 aa). The active-site Proton donor/acceptor; for transacylase activity is the histidine 260. The 419-residue stretch at 416-834 folds into the Ketosynthase family 3 (KS3) domain; it reads DDKIAVIGMA…GSNSSLVVTE (419 aa). Active-site for beta-ketoacyl synthase activity residues include cysteine 583, histidine 718, and histidine 757. Residues 943 to 1252 are malonyl-CoA:ACP transacylase (MAT) domain; that stretch reads CFGGQISTYI…HAVSITTDKS (310 aa). The tract at residues 1324-1457 is N-terminal hotdog fold; the sequence is SKGFTSFAGY…GVCSFCSATD (134 aa). One can recognise a PKS/mFAS DH domain in the interval 1324–1637; that stretch reads SKGFTSFAGY…YNKVPLPVMR (314 aa). A product template (PT) domain region spans residues 1330 to 1641; that stretch reads FAGYIDGNQR…PLPVMRGILG (312 aa). The active-site Proton acceptor; for dehydratase activity is the histidine 1359. The tract at residues 1487–1637 is C-terminal hotdog fold; it reads NIMQGTANIY…YNKVPLPVMR (151 aa). Aspartate 1542 acts as the Proton donor; for dehydratase activity in catalysis. Residues 1684 to 1696 show a composition bias toward polar residues; that stretch reads NGTTGTENPQIKS. A disordered region spans residues 1684-1716; that stretch reads NGTTGTENPQIKSKTNKVKKVPTRKSGGSDLET. Basic residues predominate over residues 1697–1706; it reads KTNKVKKVPT. Positions 1711–1788 constitute a Carrier domain; it reads GSDLETPAKT…SLVKYIREIR (78 aa). Serine 1748 bears the O-(pantetheine 4'-phosphoryl)serine mark. The segment covering 1794-1805 has biased composition (acidic residues); sequence QNVDDSESESEE. The segment at 1794–1816 is disordered; that stretch reads QNVDDSESESEELQQQATPIDSA. Tyrosine 2009 (for methyltransferase activity) is an active-site residue. Residues 2023-2197 are methyltransferase (CMeT) domain; the sequence is EVFVEKIGSS…SVGYGHVDWT (175 aa). The tract at residues 2269 to 2573 is NADPH-binding (R) domain; that stretch reads CVLITGATGS…NIIPFYDWVQ (305 aa).

It participates in mycotoxin biosynthesis. Its function is as follows. Non-reducing polyketide synthase; part of the gene cluster that mediates the biosynthesis of the selective antifungal agent ascochitine, an o-quinone methide that plays a possible protective role against other microbial competitors in nature and is considered to be important for pathogenicity of legume-associated Didymella species. The pathway probably begins with the synthesis of a keto-aldehyde intermediate by the ascochitine non-reducing polyketide synthase pksAC from successive condensations of 4 malonyl-CoA units, presumably with a simple acetyl-CoA starter unit. Release of the keto-aldehyde intermediate is consistent with the presence of the C-terminal reductive release domain. The HR-PKS (orf7) probably makes a diketide starter unit which is passed to the non-reducing polyketide synthase pksAC for further extension, producing ascochital and ascochitine. The aldehyde dehydrogenase (orf1), the 2-oxoglutarate-dependent dioxygenase (orf3) and the dehydrogenase (orf9) are probably involved in subsequent oxidations of methyl groups to the carboxylic acid of the heterocyclic ring. The ascochitine gene cluster also includes a gene encoding a short peptide (orf2) that is often found in secondary metabolite gene clusters and which function has still to be determined. The polypeptide is Non-reducing polyketide synthase AC (Didymella fabae (Leaf and pod spot disease fungus)).